The primary structure comprises 229 residues: Potassium/proton antiporter CemA (229 aa).

The next 3 membrane-spanning stretches (helical) occupy residues 6-26 (AFIPFFYFTSIVFLPWLISLC), 107-127 (ILHFSTNLISFVILSGYSFWG), and 189-209 (ILSGLVSTFPVILDTIFKYWI).

Belongs to the CemA family.

The protein resides in the plastid. It is found in the chloroplast inner membrane. The enzyme catalyses K(+)(in) + H(+)(out) = K(+)(out) + H(+)(in). Its function is as follows. Contributes to K(+)/H(+) antiport activity by supporting proton efflux to control proton extrusion and homeostasis in chloroplasts in a light-dependent manner to modulate photosynthesis. Prevents excessive induction of non-photochemical quenching (NPQ) under continuous-light conditions. Indirectly promotes efficient inorganic carbon uptake into chloroplasts. This is Potassium/proton antiporter CemA from Olimarabidopsis pumila (Dwarf rocket).